We begin with the raw amino-acid sequence, 374 residues long: Transaldolase (374 aa).

Catalysis depends on Lys140, which acts as the Schiff-base intermediate with substrate.

It belongs to the transaldolase family. Type 2 subfamily.

The protein localises to the cytoplasm. The enzyme catalyses D-sedoheptulose 7-phosphate + D-glyceraldehyde 3-phosphate = D-erythrose 4-phosphate + beta-D-fructose 6-phosphate. Its pathway is carbohydrate degradation; pentose phosphate pathway; D-glyceraldehyde 3-phosphate and beta-D-fructose 6-phosphate from D-ribose 5-phosphate and D-xylulose 5-phosphate (non-oxidative stage): step 2/3. Transaldolase is important for the balance of metabolites in the pentose-phosphate pathway. The sequence is that of Transaldolase from Renibacterium salmoninarum (strain ATCC 33209 / DSM 20767 / JCM 11484 / NBRC 15589 / NCIMB 2235).